Reading from the N-terminus, the 565-residue chain is Thiol:disulfide interchange protein DsbD (565 aa).

A signal peptide spans 1 to 19; the sequence is MAQRIFTLILLLCSTSVFA. 2 disulfide bridges follow: cysteine 122-cysteine 128 and cysteine 182-cysteine 304. The next 7 membrane-spanning stretches (helical) occupy residues 163-183, 208-228, 243-263, 296-316, 323-343, 365-385, and 386-406; these read LPFS…TPCV, LLTF…GLVV, YVLI…FGLF, IAGL…LLYI, WLGG…LMLI, FGFV…GDIW, and GLRL…ITSL. The region spanning 434-565 is the Thioredoxin domain; sequence WAFGATHTAQ…FSAHLRDRQP (132 aa). Residues cysteine 480 and cysteine 483 are joined by a disulfide bond.

It belongs to the thioredoxin family. DsbD subfamily.

The protein localises to the cell inner membrane. The catalysed reaction is [protein]-dithiol + NAD(+) = [protein]-disulfide + NADH + H(+). The enzyme catalyses [protein]-dithiol + NADP(+) = [protein]-disulfide + NADPH + H(+). Its function is as follows. Required to facilitate the formation of correct disulfide bonds in some periplasmic proteins and for the assembly of the periplasmic c-type cytochromes. Acts by transferring electrons from cytoplasmic thioredoxin to the periplasm. This transfer involves a cascade of disulfide bond formation and reduction steps. This Shigella dysenteriae serotype 1 (strain Sd197) protein is Thiol:disulfide interchange protein DsbD.